The primary structure comprises 477 residues: Adenosylhomocysteinase (477 aa).

Substrate contacts are provided by threonine 63, aspartate 142, and glutamate 202. 203-205 is an NAD(+) binding site; the sequence is TTT. Residues lysine 232 and aspartate 236 each contribute to the substrate site. NAD(+)-binding positions include asparagine 237, 266 to 271, glutamate 289, asparagine 324, 345 to 347, and asparagine 390; these read GYGDVG and IGH.

It belongs to the adenosylhomocysteinase family. The cofactor is NAD(+).

Its subcellular location is the cytoplasm. The catalysed reaction is S-adenosyl-L-homocysteine + H2O = L-homocysteine + adenosine. The protein operates within amino-acid biosynthesis; L-homocysteine biosynthesis; L-homocysteine from S-adenosyl-L-homocysteine: step 1/1. Its function is as follows. May play a key role in the regulation of the intracellular concentration of adenosylhomocysteine. The sequence is that of Adenosylhomocysteinase from Leptothrix cholodnii (strain ATCC 51168 / LMG 8142 / SP-6) (Leptothrix discophora (strain SP-6)).